Here is a 565-residue protein sequence, read N- to C-terminus: Periplasmic trehalase (565 aa).

Positions 1–30 are cleaved as a signal peptide; that stretch reads MKSPTPSRPQKMALIPACIFLCFAALSVQA. Substrate is bound by residues Arg-152, 159 to 160, Asn-196, 205 to 207, 277 to 279, and Gly-310; these read WD, RSQ, and RPE. Residues Asp-312 and Glu-496 each act as proton donor/acceptor in the active site. Residue Glu-511 coordinates substrate. Residues 539 to 565 are disordered; it reads CDNVPATRPLSESTTQPLKQKEAEPTP.

The protein belongs to the glycosyl hydrolase 37 family. As to quaternary structure, monomer.

The protein localises to the periplasm. The enzyme catalyses alpha,alpha-trehalose + H2O = alpha-D-glucose + beta-D-glucose. Functionally, provides the cells with the ability to utilize trehalose at high osmolarity by splitting it into glucose molecules that can subsequently be taken up by the phosphotransferase-mediated uptake system. The protein is Periplasmic trehalase of Escherichia coli (strain SMS-3-5 / SECEC).